The chain runs to 442 residues: Proline--tRNA ligase (442 aa).

The protein belongs to the class-II aminoacyl-tRNA synthetase family. ProS type 2 subfamily. Homodimer.

Its subcellular location is the cytoplasm. The enzyme catalyses tRNA(Pro) + L-proline + ATP = L-prolyl-tRNA(Pro) + AMP + diphosphate. In terms of biological role, catalyzes the attachment of proline to tRNA(Pro) in a two-step reaction: proline is first activated by ATP to form Pro-AMP and then transferred to the acceptor end of tRNA(Pro). This chain is Proline--tRNA ligase, found in Brucella suis (strain ATCC 23445 / NCTC 10510).